The following is a 262-amino-acid chain: LysM and putative peptidoglycan-binding domain-containing protein 3 (262 aa).

Topologically, residues 1 to 218 (MSGRIPNHGY…PYHGADWSLG (218 aa)) are extracellular. The LysM domain occupies 70–114 (ISRDICEGDTLNSIALQYCCTVADLKRANNFLNEQDFFALRTIKI). A helical membrane pass occupies residues 219–239 (WWTAVAIMVFVGIITPLFYFL). Residues 240 to 262 (YYEVLMKVNTSHTLNSIEKSGPS) are Cytoplasmic-facing.

The protein resides in the cell membrane. The protein localises to the golgi apparatus. Its function is as follows. Essential for Golgi structural integrity. The polypeptide is LysM and putative peptidoglycan-binding domain-containing protein 3 (lysmd3) (Xenopus tropicalis (Western clawed frog)).